Here is a 190-residue protein sequence, read N- to C-terminus: Large ribosomal subunit protein bL17 (190 aa).

Positions 128–190 (KKTAGRKAAQ…VEENNEQNKA (63 aa)) are disordered. The segment covering 143-154 (ALAPAEETPAPT) has biased composition (low complexity). Residues 179-190 (LAVEENNEQNKA) show a composition bias toward acidic residues.

The protein belongs to the bacterial ribosomal protein bL17 family. As to quaternary structure, part of the 50S ribosomal subunit. Contacts protein L32.

This is Large ribosomal subunit protein bL17 from Salinispora tropica (strain ATCC BAA-916 / DSM 44818 / JCM 13857 / NBRC 105044 / CNB-440).